We begin with the raw amino-acid sequence, 485 residues long: MATAPVLNQTTNGTISQVIGAVVDVQFPGELPAILTALETENGDTTLVLEVAQHLGENTVRTIAMDGTDGLVRGQEVINTGAQISVPVGPKTLGRIMNVVGEPIDMRGPVGADKANPIHAEAPAFVDQSTDAAILVTGIKVIDLLAPYAKGGKIGLFGGAGVGKTVLIQELINNIAKGHGGVSVFAGVGERTREGNDLYHEFLDAGVIAKNEAGEAISEGSKVALVFGQMNEPPGARARVALSGLTMAEYFRDEEGQDVLFFVDNIFRFTQAGSEVSALLGRIPSAVGYQPTLSTDMGNLQERITSTTKGSITSVQAIYVPADDLTDPAPATSFAHLDATTTLNRAISELGIYPAVDPLDSTSRVLEPRVVGQEHYETARKVQETLQKYKSLQDIIAILGMDELSEEDKLTVARARKIQKFLSQPFHVAEVFTGIPGCFVQIEDTVASFKAVVEGEYDHLPEQAFYMVGGIDDVVEKAKKMAEDA.

Position 158-165 (glycine 158–threonine 165) interacts with ATP.

The protein belongs to the ATPase alpha/beta chains family. F-type ATPases have 2 components, CF(1) - the catalytic core - and CF(0) - the membrane proton channel. CF(1) has five subunits: alpha(3), beta(3), gamma(1), delta(1), epsilon(1). CF(0) has four main subunits: a(1), b(1), b'(1) and c(9-12).

The protein localises to the cell inner membrane. It catalyses the reaction ATP + H2O + 4 H(+)(in) = ADP + phosphate + 5 H(+)(out). Produces ATP from ADP in the presence of a proton gradient across the membrane. The catalytic sites are hosted primarily by the beta subunits. The protein is ATP synthase subunit beta of Erythrobacter litoralis (strain HTCC2594).